The following is a 151-amino-acid chain: D-aminoacyl-tRNA deacylase (151 aa).

The Gly-cisPro motif, important for rejection of L-amino acids motif lies at 137 to 138 (GP).

Belongs to the DTD family. As to quaternary structure, homodimer.

It localises to the cytoplasm. The catalysed reaction is glycyl-tRNA(Ala) + H2O = tRNA(Ala) + glycine + H(+). It carries out the reaction a D-aminoacyl-tRNA + H2O = a tRNA + a D-alpha-amino acid + H(+). Functionally, an aminoacyl-tRNA editing enzyme that deacylates mischarged D-aminoacyl-tRNAs. Also deacylates mischarged glycyl-tRNA(Ala), protecting cells against glycine mischarging by AlaRS. Acts via tRNA-based rather than protein-based catalysis; rejects L-amino acids rather than detecting D-amino acids in the active site. By recycling D-aminoacyl-tRNA to D-amino acids and free tRNA molecules, this enzyme counteracts the toxicity associated with the formation of D-aminoacyl-tRNA entities in vivo and helps enforce protein L-homochirality. This chain is D-aminoacyl-tRNA deacylase, found in Protochlamydia amoebophila (strain UWE25).